Reading from the N-terminus, the 42-residue chain is Photosystem II reaction center protein J (42 aa).

A helical membrane pass occupies residues 10-30 (IPLWLIATVAGILVLTVVGIF).

The protein belongs to the PsbJ family. PSII is composed of 1 copy each of membrane proteins PsbA, PsbB, PsbC, PsbD, PsbE, PsbF, PsbH, PsbI, PsbJ, PsbK, PsbL, PsbM, PsbT, PsbX, PsbY, PsbZ, Psb30/Ycf12, at least 3 peripheral proteins of the oxygen-evolving complex and a large number of cofactors. It forms dimeric complexes.

It is found in the plastid. Its subcellular location is the chloroplast thylakoid membrane. One of the components of the core complex of photosystem II (PSII). PSII is a light-driven water:plastoquinone oxidoreductase that uses light energy to abstract electrons from H(2)O, generating O(2) and a proton gradient subsequently used for ATP formation. It consists of a core antenna complex that captures photons, and an electron transfer chain that converts photonic excitation into a charge separation. The sequence is that of Photosystem II reaction center protein J from Chara vulgaris (Common stonewort).